The chain runs to 421 residues: FAD-dependent monooxygenase atnJ (421 aa).

The chain crosses the membrane as a helical span at residues 9–29; the sequence is LVPLHVVIVGAGIGGLSAAVA. Positions 41 and 54 each coordinate FAD. Residue R188 is part of the active site. Residues D303 and V316 each coordinate FAD. Residues 371-392 form a disordered region; it reads RDGDAQAARDSQRKATSGTGQN.

The protein belongs to the paxM FAD-dependent monooxygenase family. FAD serves as cofactor.

The protein localises to the membrane. Its pathway is secondary metabolite biosynthesis; terpenoid biosynthesis. In terms of biological role, FAD-dependent monooxygenase; part of the gene cluster that mediates the biosynthesis of the meroterpenoids arthripenoids. The pathway begins with the HR-PKS atnH that catalyzes two chain-extension steps to form a reduced triketide, which then primes the SAT domain in the NR-PKS atnG to initiate three more cycles of extension to give a linear hexaketide corresponding to the polyketide part of arthripenoids. The FAD-dependent monooxygenase atnJ then performs an oxidative decarboxylation at C11 of the atnH/atnG product, via an electrophilic aromatic hydroxylation with concomitant ipso-decarboxylation. The membrane-bound polyprenyl transferase atnF then introduces a farnesyl group before the FAD-dependent monooxygenase atnK functions as the first epoxidase on terminal C12'-C13' olefin, followed by a second epoxidation on C7'-C8' catalyzed by atnA. The terpene cyclase/mutase atnI then initiates the sequential tricyclic ring formation through protonation of the terminal epoxide and catalyzes the regioselective and stereoselective 6/6/6-tricyclic ring formation. The cytochrome P450 monooxygenase atnM is responsible for hydroxylating both C1' and C10'. The next steps may involve ketoreduction and acetyl transfer by the ketoreductase atnB and the acetyltransferase atnC, and lead to the production of arthripenoid B, the final biosynthetic product of the atn cluster. The hydroquinone moiety in arthripenoid B is prone to undergo spontaneous oxidation to afford a benzoquinone compound, a key intermediate for generating structure diversity. For instance, addition of a cysteine followed by ring contraction gives arthripenoid A, tautomerization gives the main product arthripenoid C, addition of a molecular of water or amine affords arthripenoid D or E, respectively, and loss of one water forms arthripenoid F. The sequence is that of FAD-dependent monooxygenase atnJ from Arthrinium sp.